A 365-amino-acid polypeptide reads, in one-letter code: MEIPSQEIHIMIDNTISRRKERKTNLADAEPIVLMSVLSSLHAGYFRISLSLCSQALLWKIMVHLHSELPSMAYYLLWYLALATQVSLCFLYAFKCIFLFDMVKEEFSHYIGVNYLYAPSISCLLLLQSAPMIEPHSVLYQTLFWIFAVPVLTLDTKLYGQWFTTEKRFLSIMANPASQVSVIANLVAARGAAEMGWKECALCLFSLGMVHYLVIFVTLYQRLPGGNNFPTTLRPVFFLFFAAPATASLAWNSICGNFDTIAKMLFFLSLFIFISLVCRPNLLKKSIKRFNVAWWAYSFPITFLALNSVQYAQEVKDHVASVLMFIFSSMSVLIFISVMLLTAANSKRLLRRDHVLWSSTGPKDK.

At 1–25 the chain is on the cytoplasmic side; that stretch reads MEIPSQEIHIMIDNTISRRKERKTN. Residues 26-46 form a helical membrane-spanning segment; that stretch reads LADAEPIVLMSVLSSLHAGYF. Topologically, residues 47-73 are extracellular; that stretch reads RISLSLCSQALLWKIMVHLHSELPSMA. Residues 74 to 94 form a helical membrane-spanning segment; it reads YYLLWYLALATQVSLCFLYAF. At 95–106 the chain is on the cytoplasmic side; the sequence is KCIFLFDMVKEE. The helical transmembrane segment at 107-127 threads the bilayer; it reads FSHYIGVNYLYAPSISCLLLL. Residues 128-131 lie on the Extracellular side of the membrane; sequence QSAP. A helical membrane pass occupies residues 132–152; sequence MIEPHSVLYQTLFWIFAVPVL. Residues 153-168 lie on the Cytoplasmic side of the membrane; that stretch reads TLDTKLYGQWFTTEKR. The chain crosses the membrane as a helical span at residues 169–189; that stretch reads FLSIMANPASQVSVIANLVAA. Residues 190-199 lie on the Extracellular side of the membrane; it reads RGAAEMGWKE. The helical transmembrane segment at 200–220 threads the bilayer; sequence CALCLFSLGMVHYLVIFVTLY. Residues 221 to 235 are Cytoplasmic-facing; that stretch reads QRLPGGNNFPTTLRP. Residues 236–256 traverse the membrane as a helical segment; sequence VFFLFFAAPATASLAWNSICG. A topological domain (extracellular) is located at residue Asn257. Residues 258 to 278 form a helical membrane-spanning segment; that stretch reads FDTIAKMLFFLSLFIFISLVC. Topologically, residues 279-291 are cytoplasmic; that stretch reads RPNLLKKSIKRFN. A helical transmembrane segment spans residues 292 to 312; it reads VAWWAYSFPITFLALNSVQYA. Residues 313–321 lie on the Extracellular side of the membrane; sequence QEVKDHVAS. A helical transmembrane segment spans residues 322-342; that stretch reads VLMFIFSSMSVLIFISVMLLT. Over 343 to 365 the chain is Cytoplasmic; it reads AANSKRLLRRDHVLWSSTGPKDK.

The protein belongs to the SLAC1 S-type anion channel family. Homotrimer.

Its subcellular location is the cell membrane. Its function is as follows. Slow, weak voltage-dependent S-type anion efflux channel involved in maintenance of anion homeostasis. This is S-type anion channel SLAH4 (SLAH4) from Arabidopsis thaliana (Mouse-ear cress).